We begin with the raw amino-acid sequence, 476 residues long: 3-isopropylmalate dehydratase large subunit (476 aa).

Cys355, Cys416, and Cys419 together coordinate [4Fe-4S] cluster.

This sequence belongs to the aconitase/IPM isomerase family. LeuC type 1 subfamily. In terms of assembly, heterodimer of LeuC and LeuD. [4Fe-4S] cluster is required as a cofactor.

It catalyses the reaction (2R,3S)-3-isopropylmalate = (2S)-2-isopropylmalate. It functions in the pathway amino-acid biosynthesis; L-leucine biosynthesis; L-leucine from 3-methyl-2-oxobutanoate: step 2/4. In terms of biological role, catalyzes the isomerization between 2-isopropylmalate and 3-isopropylmalate, via the formation of 2-isopropylmaleate. This chain is 3-isopropylmalate dehydratase large subunit, found in Sphingopyxis alaskensis (strain DSM 13593 / LMG 18877 / RB2256) (Sphingomonas alaskensis).